Reading from the N-terminus, the 331-residue chain is MRNDDMAVVVNGVRKTYGKGKIVALDDVSFKVRRGEVIGLLGPNGAGKTTMVDILSTLTRPDAGSAIIAGYDVVSEPAGVRRSIMVTGQQVAVDDALSGEQNLVLFGRLWGLSKSAARKRAAELLEQFSLVHAGKRRVGTYSGGMRRRIDIACGLVVQPQVAFLDEPTTGLDPRSRQAIWDLVASFKKLGIATLLTTQYLEEADALSDRIILIDHGIIIAEGTANELKHRAGDTFCEIVPRDLKDLDAIVAALGSLLPEHHRAMLTPDSDRITMPAPDGIRMLVEAARRIDEARIELADIALRRPSLDHVFLAMTTDPTESLTHLVSGSAR.

Residues 8 to 240 (VVVNGVRKTY…AGDTFCEIVP (233 aa)) enclose the ABC transporter domain. Residue 42–49 (GPNGAGKT) participates in ATP binding.

It belongs to the ABC transporter superfamily. Drug exporter-1 (DrugE1) (TC 3.A.1.105) family. As to quaternary structure, the complex is composed of two ATP-binding proteins (DrrA) and two transmembrane proteins (DrrB and DrrC).

The protein resides in the cell membrane. Its function is as follows. Part of the ABC transporter complex DrrABC involved in doxorubicin resistance. Responsible for energy coupling to the transport system. Binds ATP. This chain is Doxorubicin resistance ATP-binding protein DrrA (drrA), found in Mycobacterium tuberculosis (strain CDC 1551 / Oshkosh).